We begin with the raw amino-acid sequence, 326 residues long: Aquaporin-4 (326 aa).

The Cytoplasmic segment spans residues 1–39; it reads MSDGAGAAARRWGKCGGRSCSRESIMVAFKGVWTQAFWK. Residues Cys15 and Cys20 are each lipidated (S-palmitoyl cysteine). Residues 40 to 60 form a helical membrane-spanning segment; that stretch reads AVTAEFLAMLIFVLLSVGSTI. Over 61-72 the chain is Extracellular; that stretch reads NWGGSENPLPVD. A helical transmembrane segment spans residues 73-92; it reads MVLISLCFGLSIATMVQCFG. The Cytoplasmic portion of the chain corresponds to 93 to 96; that stretch reads HISG. The segment at residues 97–104 is an intramembrane region (discontinuously helical); sequence GHINPAVT. The NPA 1 motif lies at 100–102; it reads NPA. The Cytoplasmic portion of the chain corresponds to 105–118; the sequence is VAMVCTRKISIAKS. Ser114 carries the post-translational modification Phosphoserine; by PKG. The helical transmembrane segment at 119-139 threads the bilayer; that stretch reads VFYITAQCLGAIIGAGILYLV. The Extracellular segment spans residues 140–158; it reads TPPNVVGGLGVTTVHGNLT. Asn156 carries N-linked (GlcNAc...) asparagine glycosylation. A helical transmembrane segment spans residues 159–179; sequence AGHGLLVELIITFQLVFTIFA. The Cytoplasmic segment spans residues 180-187; that stretch reads SCDSKRTD. The residue at position 183 (Ser183) is a Phosphoserine; by PKC. The helical transmembrane segment at 188 to 208 threads the bilayer; the sequence is VTGSIALAIGFSVAIGHLFAI. Asn209 carries an N-linked (GlcNAc...) asparagine glycan. The Extracellular segment spans residues 209 to 211; that stretch reads NYT. Positions 212 to 225 form an intramembrane region, discontinuously helical; sequence GASMNPARSFGPAV. Positions 216 to 218 match the NPA 2 motif; that stretch reads NPA. Residues 226–234 are Extracellular-facing; sequence IMGNWENHW. Residues 235–255 traverse the membrane as a helical segment; it reads IYWVGPIIGAVLAGALYEYVF. Over 256–326 the chain is Cytoplasmic; it reads CPDVELKRRL…DSAGEVLSSV (71 aa). Phosphoserine occurs at positions 279 and 288. A Phosphothreonine modification is found at Thr292. Ser324 bears the Phosphoserine mark.

Belongs to the MIP/aquaporin (TC 1.A.8) family. In terms of assembly, homotetramer. The tetramers can form oligomeric arrays in membranes. The size of the oligomers differs between tissues and is smaller in skeletal muscle than in brain. Interaction between AQP4 oligomeric arrays in close-by cells can contribute to cell-cell adhesion. Part of a complex containing MLC1, TRPV4, HEPACAM and ATP1B1. Post-translationally, phosphorylation by PKC at Ser-183 reduces conductance by 50%. Phosphorylation by PKG at Ser-114 in response to glutamate increases conductance by 40%. In terms of processing, isoform Long: Palmitoylated on its N-terminal region.

The protein resides in the cell membrane. It is found in the basolateral cell membrane. The protein localises to the endosome membrane. Its subcellular location is the sarcolemma. It localises to the cell projection. The enzyme catalyses H2O(in) = H2O(out). Functionally, forms a water-specific channel. Plays an important role in brain water homeostasis and in glymphatic solute transport. Required for a normal rate of water exchange across the blood brain interface. Required for normal levels of cerebrospinal fluid influx into the brain cortex and parenchyma along paravascular spaces that surround penetrating arteries, and for normal drainage of interstitial fluid along paravenous drainage pathways. Thereby, it is required for normal clearance of solutes from the brain interstitial fluid, including soluble beta-amyloid peptides derived from APP. Plays a redundant role in urinary water homeostasis and urinary concentrating ability. The sequence is that of Aquaporin-4 (AQP4) from Notomys alexis (Spinifex hopping mouse).